The sequence spans 1034 residues: Glycine dehydrogenase (decarboxylating), mitochondrial (1034 aa).

The transit peptide at 1–63 directs the protein to the mitochondrion; the sequence is MERARRLAML…LNGFGSQVRT (63 aa). Lysine 770 is subject to N6-(pyridoxal phosphate)lysine.

Belongs to the GcvP family. Homodimer. The glycine cleavage system is composed of four proteins: P, T, L and H. It depends on pyridoxal 5'-phosphate as a cofactor.

It is found in the mitochondrion. The catalysed reaction is N(6)-[(R)-lipoyl]-L-lysyl-[glycine-cleavage complex H protein] + glycine + H(+) = N(6)-[(R)-S(8)-aminomethyldihydrolipoyl]-L-lysyl-[glycine-cleavage complex H protein] + CO2. Its function is as follows. The glycine cleavage system catalyzes the degradation of glycine. The P protein binds the alpha-amino group of glycine through its pyridoxal phosphate cofactor; CO(2) is released and the remaining methylamine moiety is then transferred to the lipoamide cofactor of the H protein. This is Glycine dehydrogenase (decarboxylating), mitochondrial (GDCSP) from Flaveria anomala (Yellowtops).